Reading from the N-terminus, the 505-residue chain is Lysine--tRNA ligase (505 aa).

Mg(2+)-binding residues include Glu-415 and Glu-422.

It belongs to the class-II aminoacyl-tRNA synthetase family. As to quaternary structure, homodimer. The cofactor is Mg(2+).

It is found in the cytoplasm. The enzyme catalyses tRNA(Lys) + L-lysine + ATP = L-lysyl-tRNA(Lys) + AMP + diphosphate. This Vibrio parahaemolyticus serotype O3:K6 (strain RIMD 2210633) protein is Lysine--tRNA ligase.